The primary structure comprises 241 residues: Tumor necrosis factor receptor superfamily member 18 (241 aa).

Residues 1–25 form the signal peptide; it reads MAQHGAMGAFRALCGLALLCALSLG. The Extracellular portion of the chain corresponds to 26–162; the sequence is QRPTGGPGCG…CVPGSPPAEP (137 aa). Disulfide bonds link Cys-34–Cys-49, Cys-74–Cys-86, Cys-81–Cys-94, Cys-115–Cys-134, and Cys-128–Cys-153. TNFR-Cys repeat units lie at residues 34–72, 74–112, and 115–153; these read CGPG…EWDC, CVQP…GFQC, and CASG…NAVC. Asn-146 carries an N-linked (GlcNAc...) asparagine glycan. Residues 163 to 183 form a helical membrane-spanning segment; it reads LGWLTVVLLAVAACVLLLTSA. The Cytoplasmic portion of the chain corresponds to 184-241; the sequence is QLGLHIWQLRSQCMWPRETQLLLEVPPSTEDARSCQFPEEERGERSAEEKGRLGDLWV. The disordered stretch occupies residues 214-241; it reads DARSCQFPEEERGERSAEEKGRLGDLWV. A compositionally biased stretch (basic and acidic residues) spans 222–241; it reads EEERGERSAEEKGRLGDLWV.

As to quaternary structure, binds to TRAF1, TRAF2, and TRAF3, but not TRAF5 and TRAF6. Binds through its C-terminus to SIVA1/SIVA. As to expression, expressed in lymph node, peripheral blood leukocytes and weakly in spleen.

The protein localises to the cell membrane. It is found in the secreted. Receptor for TNFSF18. Seems to be involved in interactions between activated T-lymphocytes and endothelial cells and in the regulation of T-cell receptor-mediated cell death. Mediated NF-kappa-B activation via the TRAF2/NIK pathway. The chain is Tumor necrosis factor receptor superfamily member 18 (TNFRSF18) from Homo sapiens (Human).